A 492-amino-acid chain; its full sequence is Bifunctional protein GlmU (492 aa).

The tract at residues 1–241 (MTFRGDTAVV…SALVAGVNDR (241 aa)) is pyrophosphorylase. Residues 12–15 (LAAG), K26, Q83, and 88–89 (GT) contribute to the UDP-N-acetyl-alpha-D-glucosamine site. A Mg(2+)-binding site is contributed by D114. The UDP-N-acetyl-alpha-D-glucosamine site is built by G151, E166, N181, and N239. N239 contributes to the Mg(2+) binding site. Positions 242 to 262 (VQLAQLGAELNRRIVAAHQMA) are linker. The N-acetyltransferase stretch occupies residues 263 to 492 (GVTVIDPATT…TPPPDADHPP (230 aa)). UDP-N-acetyl-alpha-D-glucosamine-binding residues include R344 and K362. Catalysis depends on H374, which acts as the Proton acceptor. UDP-N-acetyl-alpha-D-glucosamine is bound by residues Y377 and N388. Residues A391, 397-398 (NY), and A434 contribute to the acetyl-CoA site. The segment at 443 to 492 (PPGALAVSGGPQRNIEDWVQQKRPGTPSAEAARKASAEQSTPPPDADHPP) is disordered.

It in the N-terminal section; belongs to the N-acetylglucosamine-1-phosphate uridyltransferase family. This sequence in the C-terminal section; belongs to the transferase hexapeptide repeat family. As to quaternary structure, homotrimer. Mg(2+) is required as a cofactor.

It is found in the cytoplasm. The enzyme catalyses alpha-D-glucosamine 1-phosphate + acetyl-CoA = N-acetyl-alpha-D-glucosamine 1-phosphate + CoA + H(+). The catalysed reaction is N-acetyl-alpha-D-glucosamine 1-phosphate + UTP + H(+) = UDP-N-acetyl-alpha-D-glucosamine + diphosphate. It participates in nucleotide-sugar biosynthesis; UDP-N-acetyl-alpha-D-glucosamine biosynthesis; N-acetyl-alpha-D-glucosamine 1-phosphate from alpha-D-glucosamine 6-phosphate (route II): step 2/2. It functions in the pathway nucleotide-sugar biosynthesis; UDP-N-acetyl-alpha-D-glucosamine biosynthesis; UDP-N-acetyl-alpha-D-glucosamine from N-acetyl-alpha-D-glucosamine 1-phosphate: step 1/1. The protein operates within bacterial outer membrane biogenesis; LPS lipid A biosynthesis. Functionally, catalyzes the last two sequential reactions in the de novo biosynthetic pathway for UDP-N-acetylglucosamine (UDP-GlcNAc). The C-terminal domain catalyzes the transfer of acetyl group from acetyl coenzyme A to glucosamine-1-phosphate (GlcN-1-P) to produce N-acetylglucosamine-1-phosphate (GlcNAc-1-P), which is converted into UDP-GlcNAc by the transfer of uridine 5-monophosphate (from uridine 5-triphosphate), a reaction catalyzed by the N-terminal domain. The protein is Bifunctional protein GlmU of Mycobacterium ulcerans (strain Agy99).